Here is a 299-residue protein sequence, read N- to C-terminus: Leucine zipper transcription factor-like protein 1 (299 aa).

Residues 96 to 299 are a coiled coil; the sequence is LKLQTDISEL…KRLAKYESED (204 aa). The tract at residues 145–299 is interaction with BSS9; the sequence is GTTELLNKEI…KRLAKYESED (155 aa).

The protein belongs to the LZTFL1 family. Self-associates. Interacts with BBS9; the interaction mediates the association of LZTL1 with the BBsome complex and regulates BBSome ciliary trafficking. In terms of tissue distribution, highly expressed in testis. Expressed in brain, cerebellum, eye, heart, kidney, liver, lung and trachea. In small intestine, graded expression along the crypt-villus axis with high levels in the villus apex and lower levels in the crypt stem cells (at protein level). Not expressed in skeletal muscle and white adipose tissue.

It is found in the cytoplasm. Functionally, regulates ciliary localization of the BBSome complex. Together with the BBSome complex, controls SMO ciliary trafficking and contributes to the sonic hedgehog (SHH) pathway regulation. May play a role in neurite outgrowth. May have tumor suppressor function. The polypeptide is Leucine zipper transcription factor-like protein 1 (Lztfl1) (Mus musculus (Mouse)).